Here is a 1376-residue protein sequence, read N- to C-terminus: DNA-directed RNA polymerase subunit beta (1376 aa).

This sequence belongs to the RNA polymerase beta chain family. The RNAP catalytic core consists of 2 alpha, 1 beta, 1 beta' and 1 omega subunit. When a sigma factor is associated with the core the holoenzyme is formed, which can initiate transcription.

It carries out the reaction RNA(n) + a ribonucleoside 5'-triphosphate = RNA(n+1) + diphosphate. Functionally, DNA-dependent RNA polymerase catalyzes the transcription of DNA into RNA using the four ribonucleoside triphosphates as substrates. The polypeptide is DNA-directed RNA polymerase subunit beta (Methylorubrum extorquens (strain PA1) (Methylobacterium extorquens)).